Consider the following 532-residue polypeptide: Tyrosinase (532 aa).

A signal peptide spans 1-22; sequence MESTTVLLAASTLLLVLHASYG. The Lumenal, melanosome segment spans residues 23–479; that stretch reads QFPRACSTAQ…LEQARQIWQW (457 aa). Residues Asn-90, Asn-115, and Asn-165 are each glycosylated (N-linked (GlcNAc...) asparagine). Positions 184, 206, and 215 each coordinate Cu cation. N-linked (GlcNAc...) asparagine glycosylation is found at Asn-234 and Asn-341. Residues His-367 and His-371 each coordinate Cu cation. An N-linked (GlcNAc...) asparagine glycan is attached at Asn-375. Residue His-394 coordinates Cu cation. A helical membrane pass occupies residues 480–500; sequence LLGAAVVGGLVTAVIATIISL. Residues 501–532 are Cytoplasmic-facing; it reads TCRRKRRTKTSEETRPLLMEAEDYHATYQSNL.

Belongs to the tyrosinase family. Active tyrosinase has been found as a homodimer and homotetramer. Requires Cu(2+) as cofactor. As to expression, frog skin.

The protein resides in the melanosome membrane. The catalysed reaction is 2 L-dopa + O2 = 2 L-dopaquinone + 2 H2O. It carries out the reaction L-tyrosine + O2 = L-dopaquinone + H2O. Activated by trypsin, chymotrypsin and subtilisin. Activated by alpha-chymotrypsin, thermolysin and Pronase. Inhibited by its product L-DOPA and tyrosine. In terms of biological role, this is a copper-containing oxidase that functions in the formation of pigments such as melanins and other polyphenolic compounds. Catalyzes the initial and rate limiting step in the cascade of reactions leading to melanin production from tyrosine. In addition to hydroxylating tyrosine to DOPA (3,4-dihydroxyphenylalanine), also catalyzes the oxidation of DOPA to DOPA-quinone. The sequence is that of Tyrosinase from Pelophylax lessonae (Pool frog).